Consider the following 109-residue polypeptide: Parvalbumin alpha (109 aa).

EF-hand domains lie at 38 to 73 (KSKE…FTPE) and 77 to 109 (LSDK…VSES). 11 residues coordinate Ca(2+): aspartate 51, aspartate 53, serine 55, phenylalanine 57, glutamate 59, glutamate 62, aspartate 90, aspartate 92, aspartate 94, lysine 96, and glutamate 101.

It belongs to the parvalbumin family.

Its function is as follows. In muscle, parvalbumin is thought to be involved in relaxation after contraction. It binds two calcium ions. The polypeptide is Parvalbumin alpha (Pelophylax lessonae (Pool frog)).